Consider the following 1134-residue polypeptide: Protocadherin 18 (1134 aa).

The first 27 residues, 1 to 27, serve as a signal peptide directing secretion; it reads MHQMNTKMHFRFALALLMAFFSHDVLA. Cadherin domains are found at residues 28-137, 138-246, 247-354, 361-465, 466-576, and 582-688; these read KNLK…SPQF, SRPV…SPAF, EQPS…KPEI, PGKE…PPRF, QRSR…VPVV, and HNNT…STAM. At 28–699 the chain is on the extracellular side; sequence KNLKYRIYEE…SVSRASLDVS (672 aa). Asn103 is a glycosylation site (N-linked (GlcNAc...) asparagine). Asn269 carries N-linked (GlcNAc...) asparagine glycosylation. Asn559 is a glycosylation site (N-linked (GlcNAc...) asparagine). A helical membrane pass occupies residues 700-720; it reads MIIIISLGAICAVLLVIMVLF. Topologically, residues 721-1134 are cytoplasmic; it reads ATRCNREKKD…NKLLQDVRQS (414 aa). 4 disordered regions span residues 769–800, 868–888, 941–1004, and 1022–1083; these read LPIR…NSHQ, SLKD…DLGR, DYRS…SSLL, and FSEC…PSSK. The span at 791-800 shows a compositional bias: polar residues; the sequence is GSRQSHNSHQ. Over residues 868-877 the composition is skewed to basic and acidic residues; the sequence is SLKDSGRGDS. Residues 892–1134 are interaction with DAB1; sequence IDRLLGEGFS…NKLLQDVRQS (243 aa). The segment covering 1027–1038 has biased composition (basic and acidic residues); it reads EGDRSNSLERRK. The segment covering 1059–1082 has biased composition (polar residues); that stretch reads THFQNPTSSSGTPLGTHSSVQPSS.

In terms of assembly, interacts with DAB1. In terms of tissue distribution, predominantly expressed in kidney and lung.

It localises to the cell membrane. Functionally, potential calcium-dependent cell-adhesion protein. This Mus musculus (Mouse) protein is Protocadherin 18 (Pcdh18).